The sequence spans 272 residues: Cerberus (272 aa).

Positions 1–17 (MHLLLVQLLVLLPLGKA) are cleaved as a signal peptide. 4 cysteine pairs are disulfide-bonded: cysteine 162–cysteine 209, cysteine 176–cysteine 223, cysteine 186–cysteine 239, and cysteine 190–cysteine 241. A CTCK domain is found at 162–246 (CRTVPFNQTI…EECQCMVKTE (85 aa)). N-linked (GlcNAc...) asparagine glycans are attached at residues asparagine 168 and asparagine 222.

Belongs to the DAN family. Forms monomers and predominantly dimers. N-glycosylated.

The protein resides in the secreted. Its function is as follows. Cytokine that may play a role in anterior neural induction and somite formation during embryogenesis in part, through a BMP-inhibitory mechanism. Can regulate Nodal signaling during gastrulation as well as the formation and patterning of the primitive streak. The polypeptide is Cerberus (Cer1) (Mus musculus (Mouse)).